The chain runs to 550 residues: MGMFCNQCEQAAKGVGCEIMGVCGKNPEVAALQDLMLYGLKGLAIYADKARELGARDEAIDLFMIEGLFTTVTNVDFDPVSLAGKLRTCYDMKEKAKSLYETAYREKNGGHAPAIAAGPAAWVIASDLEGLVKQGLEHGINTHHTDADVRSAIEILIYGLKGMAAYADHAYILGKKDEEVFAFFHKAMAATADPAKGLMDFVGLSMECGKLNIKVMGMLNEGHVDHYGHPVPTKVPTGTRRNKGILVSGHDLRMLEELLKQTAGKGIDIYTHGEMLPAHGYPGLKQKYPHLYGNFGGAWQDQAKEFPLFPGAIIFNTNCIQRPADSYKDRLFSWGQVGWPGVKHISGWDFSEVINKALECPELADAPEKEILTGFGHNAVLGVADKVIEGVKAGAIKHFFLIGGCDGAKPGRNYYTELAEKVPQDCVILTLACGKYRFNKLEFGDIGGIPRLLDIGQCNDAYSALQIALALANAFNCGVNDLPLSMILSWYEQKAVVILLSLLHLGIRNIKIGPSLPAFVTPNVLNFLVENFNLGPITTVEADLKAALGQ.

Cys-5, Cys-8, Cys-17, and Cys-23 together coordinate [4Fe-4S] cluster. His-250, Glu-274, Cys-319, Cys-405, Cys-433, Cys-458, Glu-492, and Lys-494 together coordinate hybrid [4Fe-2O-2S] cluster. Cys-405 is modified (cysteine persulfide).

The protein belongs to the HCP family. It depends on [4Fe-4S] cluster as a cofactor. The cofactor is hybrid [4Fe-2O-2S] cluster.

Its subcellular location is the cytoplasm. The catalysed reaction is A + NH4(+) + H2O = hydroxylamine + AH2 + H(+). Catalyzes the reduction of hydroxylamine to form NH(3) and H(2)O. The sequence is that of Hydroxylamine reductase from Geobacter sulfurreducens (strain ATCC 51573 / DSM 12127 / PCA).